Reading from the N-terminus, the 203-residue chain is EVTKPETINYRTLKPEMDGLFCERIFGPAKDWECHCGKYKRVRHRGIVCERCGVEVTESRVRRHRMGYIKLAAPVAHVWYLKGIPSYISILLDMPLRDVEQIVYFNSYVVLSPGNAETLSYKQLLSEDQWLEIEDQIYSEDSTLQGVEVGIGAEALLRLLADINLEQEAETLREEITTAKGQKRAKLIKRLRVIDNFIATGSK.

Zn(2+)-binding residues include Cys-34, Cys-36, Cys-49, and Cys-52.

The protein belongs to the RNA polymerase beta' chain family. RpoC1 subfamily. As to quaternary structure, in cyanobacteria the RNAP catalytic core is composed of 2 alpha, 1 beta, 1 beta', 1 gamma and 1 omega subunit. When a sigma factor is associated with the core the holoenzyme is formed, which can initiate transcription. Zn(2+) is required as a cofactor.

It catalyses the reaction RNA(n) + a ribonucleoside 5'-triphosphate = RNA(n+1) + diphosphate. Functionally, DNA-dependent RNA polymerase catalyzes the transcription of DNA into RNA using the four ribonucleoside triphosphates as substrates. In Fischerella muscicola, this protein is DNA-directed RNA polymerase subunit gamma (rpoC1).